A 1449-amino-acid polypeptide reads, in one-letter code: MWPNSNLNAVLLILAVLACPTSSQHVPLAMANSTSNQVPTDPGFMPLQQSPGSVFFVHHNQQNAMQLRHSMEGKLRNIRNTELRVAKIQEIFDSMHFSSAKGASNTRQASSNDSNVVNPQLQRDLQLFSERLSKKIQKATYVVLELRELLRYNLTKVWQYSYDDEDDESESEMDLEMELEDLHARNTASPTDEHVQLYLNTQIESCQPDYETDLEYGSSSTQSIHYNRQQIQILNYLKSDDARATFLNENNARSLAVNGYISNQLVLLKRRLSRSDAENSNSKPISGNHFKHIYFLSNSDGASASLHFRQLYVSAIKQKFVLFLIDVGSALSAELFDLSKSFVHEMLQLLEDTDKVSLVTVASEANFMSLEAFPAEAGHGIYSATRAHKEEIISFINSLSRAQAFTNHSLGFEYSFELLHRLQQSGMINTAEQPVEFVYITRGLLTNLSDAMAVLRVVADGQRRLRAPVIINTCAVVLDEKRIMYEKQFLNDVASQNYTKYEIDVASWWPSGQEASELVGRFYVLSKMHAETSLPQTSSRIFGPLFQERYLSDTLEVHPPVVDADSGDVLVSITHAVPPYGVVGVNLYLSDLLEDLLNYPSTTSSAKQGLGYAFLLDRSTGNTLAHPAFPRPLIQRETSYPVNIAYLENATDFSSHIRDRLLREESGNVTTDVYVGRQRLQRTYYWQSVLGFYVLCLVSSGGDTLRNVSSTQRYNLKDTVSNYEPGYYGESMDLLYHRLDLNQGGSAPPKTCRYFRQVATMDAPTLFLSAAAFESPFGFLHNNRPRTQLRHVESIMAYLRDSSGLLANMGLRPSIRHEVGVLYQAMQQLRRRHQDARGSLRSHVIRRYIASVSGVLQLYPGCLLSSSYDPTRRPWFRQAIAQPGKIVSTAPYLDAGGAGYIITIAHTIFEGKAHALHSAQQDRPVAVVALDVPYAFYYRLILEGTPICQLPHIKCLLFEHEGYLLAHPSMLQPATLTKNQRRPHEHLTHKESYLANDMLNHGQLVRKLGCASYQNRTLQRYYAFNTSLSSILGNVVHGERTKYAIALIRGSNLFAAVLNSSCDGGAFCPCSTIDRECLNCKRMDQTDCECPCECPMVGDSSSPSSLMYFANYTRQFPYCPPPSEHFIALPPTTQLLSTLPNCPGSAGICETYSTQRECLGVMGCEWCQLDVDGNSFSTSFCSSQASCFNGVLASLTPYGELDEMELLAAHNPQREQHAYSAFGPLGGAIVVLVMVIGFAIYCYRHNLDAQTQEHFYVDSVQEENYGLPLSRFNFDDCKAHDEPPLGGGYDHASAQRQLMHAADISPYHVSSGSSYRRPPNGESDHGYSTMTPHEDSSDQQCFTLAEPLLLHDKRHSKSDTMSISTSISSPTNRQQSSSQPNTHPYLSNQPTSKTERYKQVQATPSPCRGTPAGGSVYGQTTLPLEGDKTRPHYILAPVTVHRHMETAES.

The signal sequence occupies residues 1–23; sequence MWPNSNLNAVLLILAVLACPTSS. Topologically, residues 24-1220 are extracellular; it reads QHVPLAMANS…NPQREQHAYS (1197 aa). N-linked (GlcNAc...) asparagine glycosylation is found at asparagine 32, asparagine 112, asparagine 153, asparagine 407, asparagine 447, and asparagine 497. The region spanning 320-541 is the VWFA domain; it reads FVLFLIDVGS…TSLPQTSSRI (222 aa). The region spanning 557-639 is the Cache 1 domain; it reads VHPPVVDADS…PRPLIQRETS (83 aa). 3 N-linked (GlcNAc...) asparagine glycosylation sites follow: asparagine 649, asparagine 668, and asparagine 707. The Cache 2 domain maps to 889–934; that stretch reads TAPYLDAGGAGYIITIAHTIFEGKAHALHSAQQDRPVAVVALDVPY. Residues asparagine 1015, asparagine 1025, asparagine 1059, and asparagine 1111 are each glycosylated (N-linked (GlcNAc...) asparagine). The chain crosses the membrane as a helical span at residues 1221 to 1241; it reads AFGPLGGAIVVLVMVIGFAIY. The Cytoplasmic portion of the chain corresponds to 1242 to 1449; it reads CYRHNLDAQT…VHRHMETAES (208 aa). Disordered regions lie at residues 1307–1339 and 1352–1416; these read YHVS…SSDQ and DKRH…GGSV. Residues 1359 to 1369 show a composition bias toward low complexity; the sequence is DTMSISTSISS. Polar residues predominate over residues 1370–1392; that stretch reads PTNRQQSSSQPNTHPYLSNQPTS.

This sequence belongs to the calcium channel subunit alpha-2/delta family.

The protein localises to the membrane. The protein is VWFA and cache domain-containing protein CG16868 of Drosophila melanogaster (Fruit fly).